Here is a 436-residue protein sequence, read N- to C-terminus: 3-ketoacyl-CoA thiolase (436 aa).

Residue Cys99 is the Acyl-thioester intermediate of the active site. Catalysis depends on proton acceptor residues His392 and Cys422.

This sequence belongs to the thiolase-like superfamily. Thiolase family. Heterotetramer of two alpha chains (FadJ) and two beta chains (FadI).

Its subcellular location is the cytoplasm. The enzyme catalyses an acyl-CoA + acetyl-CoA = a 3-oxoacyl-CoA + CoA. It functions in the pathway lipid metabolism; fatty acid beta-oxidation. In terms of biological role, catalyzes the final step of fatty acid oxidation in which acetyl-CoA is released and the CoA ester of a fatty acid two carbons shorter is formed. This Shewanella sediminis (strain HAW-EB3) protein is 3-ketoacyl-CoA thiolase.